Here is a 427-residue protein sequence, read N- to C-terminus: Glutamate-1-semialdehyde 2,1-aminomutase (427 aa).

Lysine 265 carries the N6-(pyridoxal phosphate)lysine modification.

This sequence belongs to the class-III pyridoxal-phosphate-dependent aminotransferase family. HemL subfamily. In terms of assembly, homodimer. The cofactor is pyridoxal 5'-phosphate.

The protein localises to the cytoplasm. The catalysed reaction is (S)-4-amino-5-oxopentanoate = 5-aminolevulinate. It functions in the pathway porphyrin-containing compound metabolism; protoporphyrin-IX biosynthesis; 5-aminolevulinate from L-glutamyl-tRNA(Glu): step 2/2. The sequence is that of Glutamate-1-semialdehyde 2,1-aminomutase from Colwellia psychrerythraea (strain 34H / ATCC BAA-681) (Vibrio psychroerythus).